The following is a 102-amino-acid chain: Small ribosomal subunit protein uS10 (102 aa).

This sequence belongs to the universal ribosomal protein uS10 family. In terms of assembly, part of the 30S ribosomal subunit.

In terms of biological role, involved in the binding of tRNA to the ribosomes. The polypeptide is Small ribosomal subunit protein uS10 (Brucella abortus (strain S19)).